Here is a 91-residue protein sequence, read N- to C-terminus: Bombyxin C-1 (91 aa).

The first 19 residues, Met-1–Ala-19, serve as a signal peptide directing secretion. Gln-20 is subject to Pyrrolidone carboxylic acid. 3 cysteine pairs are disulfide-bonded: Cys-27–Cys-76, Cys-39–Cys-89, and Cys-75–Cys-80. Positions Ser-47–Gly-67 are cleaved as a propeptide — c peptide like.

It belongs to the insulin family. In terms of assembly, heterodimer of a B chain and an A chain linked by two disulfide bonds.

Its subcellular location is the secreted. Functionally, brain peptide responsible for activation of prothoracic glands to produce ecdysone in insects. The chain is Bombyxin C-1 (BBXC1) from Bombyx mori (Silk moth).